We begin with the raw amino-acid sequence, 371 residues long: Cytochrome b (371 aa).

4 helical membrane passes run 25 to 45 (FGSM…FLAV), 69 to 90 (WLMQ…YTHI), 105 to 125 (WLSG…GYVL), and 170 to 190 (FFAL…LHIM). Heme b contacts are provided by His-75 and His-89. Heme b-binding residues include His-174 and His-188. His-193 contributes to the a ubiquinone binding site. Transmembrane regions (helical) follow at residues 218-238 (YKDM…VAFF), 280-300 (LGGA…PFTH), 312-332 (IMQF…WAAT), and 339-358 (FTAI…ITNP).

Belongs to the cytochrome b family. The cytochrome bc1 complex contains 3 respiratory subunits (MT-CYB, CYC1 and UQCRFS1), 2 core proteins (UQCRC1 and UQCRC2) and probably 6 low-molecular weight proteins. The cofactor is heme b.

The protein resides in the mitochondrion inner membrane. In terms of biological role, component of the ubiquinol-cytochrome c reductase complex (complex III or cytochrome b-c1 complex) that is part of the mitochondrial respiratory chain. The b-c1 complex mediates electron transfer from ubiquinol to cytochrome c. Contributes to the generation of a proton gradient across the mitochondrial membrane that is then used for ATP synthesis. This is Cytochrome b (MT-CYB) from Eryx colubrinus loveridgei.